Reading from the N-terminus, the 574-residue chain is Desiccation/radiation resistance protein DR_1769 (574 aa).

The N-terminal stretch at 1 to 33 (MPDPAARRFSLPPFPLAALALSVALLGAPASLA) is a signal peptide. The segment covering 400–438 (TAQTQARQAAAAASTSQQPRLPTLAQAPAPTPAPAQTTP) has biased composition (low complexity). The segment at 400-461 (TAQTQARQAA…APVPPVASPA (62 aa)) is disordered. Residues 439 to 459 (RPQPTPAQPATPAAPVPPVAS) are compositionally biased toward pro residues.

Functionally, plays an important role in resistance to desiccation and radiation, maybe by protecting genome integrity under extreme conditions. This is Desiccation/radiation resistance protein DR_1769 from Deinococcus radiodurans (strain ATCC 13939 / DSM 20539 / JCM 16871 / CCUG 27074 / LMG 4051 / NBRC 15346 / NCIMB 9279 / VKM B-1422 / R1).